The chain runs to 206 residues: Small ribosomal subunit protein uS4 (206 aa).

The region spanning 96–157 is the S4 RNA-binding domain; it reads CRLDNVVYRM…KCRNQLRIAQ (62 aa).

The protein belongs to the universal ribosomal protein uS4 family. As to quaternary structure, part of the 30S ribosomal subunit. Contacts protein S5. The interaction surface between S4 and S5 is involved in control of translational fidelity.

Its function is as follows. One of the primary rRNA binding proteins, it binds directly to 16S rRNA where it nucleates assembly of the body of the 30S subunit. With S5 and S12 plays an important role in translational accuracy. This chain is Small ribosomal subunit protein uS4, found in Stutzerimonas stutzeri (strain A1501) (Pseudomonas stutzeri).